Here is an 808-residue protein sequence, read N- to C-terminus: Probable ATP-dependent helicase MJ1401 (808 aa).

Positions Tyr-189 to Thr-217 match the Q motif motif. Positions Lys-221–Asn-391 constitute a Helicase ATP-binding domain. Ser-234–Thr-241 is an ATP binding site. A DEIH box motif is present at residues Asp-336–His-339. Residues Pro-396–Ala-585 form the Helicase C-terminal domain.

Belongs to the DEAD box helicase family.

In Methanocaldococcus jannaschii (strain ATCC 43067 / DSM 2661 / JAL-1 / JCM 10045 / NBRC 100440) (Methanococcus jannaschii), this protein is Probable ATP-dependent helicase MJ1401.